Here is a 372-residue protein sequence, read N- to C-terminus: Putative 26S proteasome regulatory subunit homolog MTH_1011 (372 aa).

Position 164–171 (164–171) interacts with ATP; sequence GSPGTGKT.

Belongs to the AAA ATPase family.

The 26S proteasome is involved in the ATP-dependent degradation of ubiquitinated proteins. The regulatory (or ATPase) complex confers ATP dependency and substrate specificity to the 26S complex. The polypeptide is Putative 26S proteasome regulatory subunit homolog MTH_1011 (Methanothermobacter thermautotrophicus (strain ATCC 29096 / DSM 1053 / JCM 10044 / NBRC 100330 / Delta H) (Methanobacterium thermoautotrophicum)).